We begin with the raw amino-acid sequence, 152 residues long: Transcriptional repressor NrdR (152 aa).

A zinc finger spans residues 3-34; sequence CPYCNASDTKVIDSRLAAEGAQVRRRRSCNSC. An ATP-cone domain is found at 49 to 139; that stretch reads PRIIKSSGKI…VYRDFQDIDA (91 aa).

The protein belongs to the NrdR family. It depends on Zn(2+) as a cofactor.

In terms of biological role, negatively regulates transcription of bacterial ribonucleotide reductase nrd genes and operons by binding to NrdR-boxes. The chain is Transcriptional repressor NrdR from Psychrobacter arcticus (strain DSM 17307 / VKM B-2377 / 273-4).